A 297-amino-acid chain; its full sequence is N-acetylmuramic acid 6-phosphate etherase (297 aa).

Residues 55–218 form the SIS domain; the sequence is ITKHFKQGGR…STGAMVGIGK (164 aa). Glu83 functions as the Proton donor in the catalytic mechanism. Glu114 is a catalytic residue.

This sequence belongs to the GCKR-like family. MurNAc-6-P etherase subfamily. Homodimer.

It catalyses the reaction N-acetyl-D-muramate 6-phosphate + H2O = N-acetyl-D-glucosamine 6-phosphate + (R)-lactate. The protein operates within amino-sugar metabolism; N-acetylmuramate degradation. Specifically catalyzes the cleavage of the D-lactyl ether substituent of MurNAc 6-phosphate, producing GlcNAc 6-phosphate and D-lactate. The sequence is that of N-acetylmuramic acid 6-phosphate etherase from Oenococcus oeni (strain ATCC BAA-331 / PSU-1).